Reading from the N-terminus, the 199-residue chain is MAKVLVLYYSAYGHIEKMAYAVAEGAESAGAEVSVKRVPELVSEEVAKASHYKIDQPAPVATVEELGDYDAIIFGAGTRYGTVASQLRNFIDQTGSLWAKGKLVGKVGSAFTSSATQHGGQESTILGLIPTMLHHGMVVVGLPYAFQGQMGIDEIKGGSPYGASTITGGDGSRQPSEIELDAARFQGAHVARIAAKLAD.

Residues 4–190 (VLVLYYSAYG…DAARFQGAHV (187 aa)) form the Flavodoxin-like domain. Residues 10–15 (SAYGHI) and 78–80 (TRY) each bind FMN. Tyr12 lines the NAD(+) pocket. Position 98 (Trp98) interacts with substrate. FMN-binding positions include 113-119 (SSATQHG) and His134.

The protein belongs to the WrbA family. The cofactor is FMN.

The enzyme catalyses a quinone + NADH + H(+) = a quinol + NAD(+). It carries out the reaction a quinone + NADPH + H(+) = a quinol + NADP(+). In Sinorhizobium fredii (strain NBRC 101917 / NGR234), this protein is NAD(P)H dehydrogenase (quinone).